A 339-amino-acid chain; its full sequence is Transcription factor IIIA (339 aa).

C2H2-type zinc fingers lie at residues 13–37 (YICSFADCGASYNKNWKLRAHLCKH), 43–67 (FPCKEEGCDKGFTSLHHLTRHSITH), 73–98 (FKCDSDKCDLTFTTKANMKKHFNRFH), 105–129 (YVCHFEGCDKAFKKHNQLKVHQFTH), 135–159 (YKCPHEGCDKSFSVPSCLKRHEKVH), 162–188 (YPCKKDDSCLFVGKTWTLYLKHVKECH), 192–214 (VMCDECKRTFKHKDYLRNHKKTH), 221–246 (YCCPRDGCERSYTTEFNLQSHMQSFH), and 252–276 (FACEHAECGKSFAMKKSLERHSVVH). Basic and acidic residues-rich tracts occupy residues 275 to 288 (VHDPEKRKLKEKCP) and 305 to 316 (KSKEKSAAKATE). The interval 275-339 (VHDPEKRKLK…ETKGSLVIEK (65 aa)) is disordered.

As to expression, synthesized in oocytes and, in much lower levels, in somatic cells.

It is found in the nucleus. Functionally, involved in ribosomal large subunit biogenesis. Interacts with the internal control region (ICR) of approximately 50 bases within the 5S RNA genes, is required for correct transcription of these genes by RNA polymerase III. Also binds the transcribed 5S RNA's. The polypeptide is Transcription factor IIIA (gtf3a) (Xenopus borealis (Kenyan clawed frog)).